A 66-amino-acid chain; its full sequence is FMRFamide-like neuropeptide 21 (66 aa).

A signal peptide spans 1 to 16 (MRLFILLSCLLAWVLA).

It belongs to the FARP (FMRFamide related peptide) family. In terms of processing, may be processed by convertase egl-3. In terms of tissue distribution, expressed in the ADL, ASE and ASH sensory neurons, the URA motor neurons and the MC, M2 and M4 pharyngeal neurons.

It is found in the secreted. FMRFamide-like neuropeptide. Involved in modulating locomotion quiescence during the sleep-like state called lethargus which occurs during molting between larval and adult stages, acting via the G-protein coupled receptor npr-1. Plays a role in modulating social and feeding behavior. Its function is as follows. Ligand to G-protein coupled receptor npr-1. The sequence is that of FMRFamide-like neuropeptide 21 from Caenorhabditis elegans.